A 163-amino-acid chain; its full sequence is MAENTNNSAVTETEETTAAFTTETNSGAGTGTSTIAPGYGTGRRKEAVARVRLVPGTGEWKINGRTLEEYFPSKLLQREVNSPIVLLKLEGKFDAIVLVDGGGTTGQAGAIRLGVARALNAIDRDANRAALKKAGFLTRDARVVERKKAGLHKARRAPQFSKR.

A compositionally biased stretch (low complexity) spans M1–N25. Residues M1–G40 are disordered.

The protein belongs to the universal ribosomal protein uS9 family.

The polypeptide is Small ribosomal subunit protein uS9 (Bifidobacterium animalis subsp. lactis (strain AD011)).